The sequence spans 186 residues: Protein C (186 aa).

Positions 1–15 are enriched in polar residues; it reads MSKTDWNASGLSRPS. The disordered stretch occupies residues 1–44; the sequence is MSKTDWNASGLSRPSPSAHWPSRKLWQHGQKYQTTQDRSEPPAG.

It belongs to the morbillivirus protein C family. As to quaternary structure, interacts with the phosphoprotein (via C-terminus); this interaction allows C to associate with the ribonucleocapsid.

It localises to the host nucleus. Its subcellular location is the host cytoplasmic vesicle. Functionally, ribonucleocapsid-associated protein that interacts with the phosphoprotein (P), thereby increasing replication accuracy and processivity of the polymerase complex. This Homo sapiens (Human) protein is Protein C (P/V/C).